Here is a 347-residue protein sequence, read N- to C-terminus: Probable dual-specificity RNA methyltransferase RlmN (347 aa).

The active-site Proton acceptor is glutamate 90. Positions 96–326 constitute a Radical SAM core domain; sequence YKHGNSICIS…VTVRREMGSD (231 aa). A disulfide bond links cysteine 103 and cysteine 331. Cysteine 110, cysteine 114, and cysteine 117 together coordinate [4Fe-4S] cluster. S-adenosyl-L-methionine-binding positions include 157-158, serine 189, 212-214, and asparagine 288; these read GE and SLH. The active-site S-methylcysteine intermediate is the cysteine 331.

The protein belongs to the radical SAM superfamily. RlmN family. Requires [4Fe-4S] cluster as cofactor.

The protein localises to the cytoplasm. It catalyses the reaction adenosine(2503) in 23S rRNA + 2 reduced [2Fe-2S]-[ferredoxin] + 2 S-adenosyl-L-methionine = 2-methyladenosine(2503) in 23S rRNA + 5'-deoxyadenosine + L-methionine + 2 oxidized [2Fe-2S]-[ferredoxin] + S-adenosyl-L-homocysteine. It carries out the reaction adenosine(37) in tRNA + 2 reduced [2Fe-2S]-[ferredoxin] + 2 S-adenosyl-L-methionine = 2-methyladenosine(37) in tRNA + 5'-deoxyadenosine + L-methionine + 2 oxidized [2Fe-2S]-[ferredoxin] + S-adenosyl-L-homocysteine. In terms of biological role, specifically methylates position 2 of adenine 2503 in 23S rRNA and position 2 of adenine 37 in tRNAs. This chain is Probable dual-specificity RNA methyltransferase RlmN, found in Clostridium botulinum (strain Alaska E43 / Type E3).